The chain runs to 1651 residues: Putative serine/threonine-protein kinase/receptor R818 (1651 aa).

The N-terminal stretch at 1 to 19 is a signal peptide; it reads MKSIGIFVVALWLTHFCDG. N-linked (GlcNAc...) asparagine; by host glycans are attached at residues asparagine 111, asparagine 135, asparagine 190, asparagine 236, asparagine 275, asparagine 276, asparagine 287, asparagine 452, asparagine 455, asparagine 477, asparagine 495, asparagine 540, asparagine 596, and asparagine 722. A helical transmembrane segment spans residues 749–769; the sequence is IILAIVIPVSFVICCIIIVLV. Positions 793–1057 constitute a Protein kinase 1 domain; the sequence is LDFMESLGSG…EIMTKLSTLI (265 aa). Residues 799 to 807 and lysine 820 contribute to the ATP site; that span reads LGSGGSGEV. Aspartate 915 serves as the catalytic Proton acceptor. The segment at 1089–1115 is disordered; it reads IHNNDETKNSFGSTTYGSNTISSSSNT. Over residues 1100–1115 the composition is skewed to low complexity; the sequence is GSTTYGSNTISSSSNT. A Guanylate cyclase domain is found at 1135–1278; that stretch reads IIVFTDIISA…VTVNIAAKIT (144 aa). Residues 1394 to 1645 enclose the Protein kinase 2 domain; that stretch reads IQIGKQIGVG…DVIMGLNDML (252 aa). Residues 1400 to 1408 and lysine 1421 each bind ATP; that span reads IGVGSYGIV. Aspartate 1515 (proton acceptor) is an active-site residue.

It is found in the membrane. It carries out the reaction L-seryl-[protein] + ATP = O-phospho-L-seryl-[protein] + ADP + H(+). The enzyme catalyses L-threonyl-[protein] + ATP = O-phospho-L-threonyl-[protein] + ADP + H(+). This Acanthamoeba polyphaga mimivirus (APMV) protein is Putative serine/threonine-protein kinase/receptor R818.